A 1067-amino-acid chain; its full sequence is Kinesin-like protein KIF11 (1067 aa).

A Kinesin motor domain is found at 18–359; that stretch reads NIQVVVRCRP…LEYANRAKNI (342 aa). 105 to 112 contacts ATP; it reads GQTGTGKT. Positions 365-480 form a coiled coil; the sequence is VNQKLTKRAL…SKEQLAQEAF (116 aa). Thr937 is subject to Phosphothreonine; by CDK1. Ser1046 carries the post-translational modification Phosphoserine; by NEK6. A disordered region spans residues 1048 to 1067; sequence IMDEAEQSLPKSKLPLRMQN.

The protein belongs to the TRAFAC class myosin-kinesin ATPase superfamily. Kinesin family. BimC subfamily. As to quaternary structure, heterotetramer of two heavy and two light chains. Interacts with aurka. Post-translationally, phosphorylation of Thr-937 during mitosis controls the association of this protein with the spindle apparatus. A subset of this protein primarily localized at the spindle pole is phosphorylated by NEK6 during mitosis. In terms of processing, phosphorylated on a serine residue by aurka.

The protein localises to the cytoplasm. Its subcellular location is the cytoskeleton. The protein resides in the spindle pole. Plus end-directed motor protein required for establishing a bipolar spindle. Associates with both interphase and mitotic spindle microtubules. May be involved in nuclear divisions taking place during the development of unfertilized eggs. Required in non-mitotic cells for transport of secretory proteins from the Golgi complex to the cell surface. The chain is Kinesin-like protein KIF11 from Xenopus tropicalis (Western clawed frog).